The following is a 319-amino-acid chain: L-galactose dehydrogenase (319 aa).

The active-site Proton donor is Tyr59. Residues 122–269 (HCHDIEFGSL…ANKEISSVLV (148 aa)) form the SIS domain. His124 contributes to the substrate binding site.

It belongs to the aldo/keto reductase family.

It carries out the reaction L-galactose + NAD(+) = L-galactono-1,4-lactone + NADH + H(+). Catalyzes the oxidation of L-galactose to L-galactono-1,4-lactone in the presence of NAD(+). Uses NAD(+) as a hydrogen acceptor much more efficiently than NADP(+). This Arabidopsis thaliana (Mouse-ear cress) protein is L-galactose dehydrogenase (LGALDH).